Here is a 567-residue protein sequence, read N- to C-terminus: Urease subunit alpha (567 aa).

The region spanning 129–567 (GGIDAHIHFI…LPMAQRYFLF (439 aa)) is the Urease domain. The Ni(2+) site is built by His134, His136, and Lys217. Lys217 is modified (N6-carboxylysine). His219 is a substrate binding site. Ni(2+) contacts are provided by His246 and His272. Residue His320 is the Proton donor of the active site. Asp360 contributes to the Ni(2+) binding site.

This sequence belongs to the metallo-dependent hydrolases superfamily. Urease alpha subunit family. In terms of assembly, heterotrimer of UreA (gamma), UreB (beta) and UreC (alpha) subunits. Three heterotrimers associate to form the active enzyme. Requires Ni cation as cofactor. Carboxylation allows a single lysine to coordinate two nickel ions.

It localises to the cytoplasm. The catalysed reaction is urea + 2 H2O + H(+) = hydrogencarbonate + 2 NH4(+). The protein operates within nitrogen metabolism; urea degradation; CO(2) and NH(3) from urea (urease route): step 1/1. The protein is Urease subunit alpha of Teredinibacter turnerae (strain ATCC 39867 / T7901).